The chain runs to 644 residues: Exoribonuclease 2 (644 aa).

The RNB domain occupies 189 to 516 (REDLTALNFV…NHRLLKAIIT (328 aa)). The S1 motif domain maps to 561–643 (DTRFPAEIID…ETRNVVARPV (83 aa)).

This sequence belongs to the RNR ribonuclease family. RNase II subfamily.

Its subcellular location is the cytoplasm. It catalyses the reaction Exonucleolytic cleavage in the 3'- to 5'-direction to yield nucleoside 5'-phosphates.. In terms of biological role, involved in mRNA degradation. Hydrolyzes single-stranded polyribonucleotides processively in the 3' to 5' direction. In Yersinia enterocolitica serotype O:8 / biotype 1B (strain NCTC 13174 / 8081), this protein is Exoribonuclease 2.